The primary structure comprises 312 residues: MANNMIACRKSFTDTLLELARQDKDIVAVTTDARGSVTLGDFAKELPAQFVECGIAEQDAVGISAGLAHSGKKVFVCGPACFYVARSLEQVKVDLAYSQNNVKILGVSGGVAYGALGATHHSLHDIAVLRTFPGMNIVLPCDARQTRKLVKLLVDYPEPVYVRVGRAAVPDVYENDDFEFVLGKANTLLDGTDLTIIAAGETVYHAYQAGLMLREKGIQARVLDMSSIKPVDVEAIRKAAEETGRIITVEEHSRFGGLGAIVVETLSENPVPVRIIGIPDENVVHGNSHEIFAHYGLDKEGICKTALEFVKK.

This sequence belongs to the transketolase family. Probable heterodimer composed of AptA and AptB. Thiamine diphosphate serves as cofactor.

The catalysed reaction is apulose 4-phosphate + D-glyceraldehyde 3-phosphate = D-xylulose 5-phosphate + dihydroxyacetone phosphate. The protein operates within carbohydrate metabolism. Its function is as follows. Involved in catabolism of D-apiose. Catalyzes the transfer of the glycolaldehyde group from apulose-4-phosphate to D-glyceraldehyde 3-phosphate, generating dihydroxyacetone phosphate and D-xylulose-5-phosphate. This is Apulose-4-phosphate transketolase subunit B from Phocaeicola vulgatus (strain ATCC 8482 / DSM 1447 / JCM 5826 / CCUG 4940 / NBRC 14291 / NCTC 11154) (Bacteroides vulgatus).